The chain runs to 504 residues: L-carnitine/gamma-butyrobetaine antiporter (504 aa).

A run of 12 helical transmembrane segments spans residues 10–30 (IEPK…WLTV), 51–71 (WGWA…WLVF), 92–112 (IFMM…SIEI), 143–163 (GPLP…FFFV), 195–215 (FYLV…TPLV), 231–251 (LDAI…ACGL), 263–283 (SYLS…SFIM), 316–336 (WTVF…IFLA), 347–367 (LCFG…TVLG), 398–418 (WAAL…CFIA), 446–466 (LLVR…LLAL), and 475–495 (AIIA…LSFI).

It belongs to the BCCT transporter (TC 2.A.15) family. CaiT subfamily. As to quaternary structure, homotrimer.

It localises to the cell inner membrane. The catalysed reaction is 4-(trimethylamino)butanoate(in) + (R)-carnitine(out) = 4-(trimethylamino)butanoate(out) + (R)-carnitine(in). It participates in amine and polyamine metabolism; carnitine metabolism. In terms of biological role, catalyzes the exchange of L-carnitine for gamma-butyrobetaine. This is L-carnitine/gamma-butyrobetaine antiporter from Escherichia coli (strain ATCC 8739 / DSM 1576 / NBRC 3972 / NCIMB 8545 / WDCM 00012 / Crooks).